Consider the following 1384-residue polypeptide: RRP12-like protein (1384 aa).

A compositionally biased stretch (basic residues) spans Met-1–Lys-13. The segment at Met-1–His-32 is disordered. Positions Arg-19–Gln-29 are enriched in polar residues. Residues Ser-82, Ser-85, Ser-96, Ser-1094, Ser-1095, Ser-1117, and Ser-1119 each carry the phosphoserine modification. 3 disordered regions span residues Leu-1082–Gly-1102, Leu-1114–Asp-1155, and Ser-1176–Lys-1384. 2 stretches are compositionally biased toward acidic residues: residues Ala-1090–Leu-1099 and Leu-1114–Ala-1127. Residues Ser-1176–Gln-1191 show a composition bias toward polar residues. Ser-1221, Ser-1225, Ser-1227, Ser-1230, Ser-1250, and Ser-1251 each carry phosphoserine. 2 stretches are compositionally biased toward polar residues: residues Ser-1276–Tyr-1285 and Thr-1297–Pro-1315. A compositionally biased stretch (basic and acidic residues) spans Gly-1321–Lys-1334. Positions Leu-1348–Ser-1362 are enriched in basic residues. A compositionally biased stretch (gly residues) spans Ala-1369–Arg-1378.

The protein belongs to the RRP12 family.

The protein resides in the nucleus. This is RRP12-like protein from Drosophila melanogaster (Fruit fly).